The following is a 302-amino-acid chain: Probable histone acetyltransferase Rv0428c (302 aa).

It catalyses the reaction L-lysyl-[histone] + acetyl-CoA = N(6)-acetyl-L-lysyl-[histone] + CoA + H(+). Shows histone acetyl transferase (HAT) activity with recombinant eukaryotic H3 histone expressed in bacteria as substrate and acetyl-CoA as donor. May be involved in survival under stress conditions. The sequence is that of Probable histone acetyltransferase Rv0428c from Mycobacterium tuberculosis (strain ATCC 25618 / H37Rv).